Consider the following 40-residue polypeptide: Small polypeptide DEVIL 3 (40 aa).

Residues 9–40 (PCNKKLGGYLKEQKGRLYIIRRCVVMLICWHD) form a required for DVL/RTFL small polypeptide activity region. A helical transmembrane segment spans residues 12–28 (KKLGGYLKEQKGRLYII).

This sequence belongs to the DVL/RTFL small polypeptides family. In terms of tissue distribution, mostly expressed in flowers and stems, and, to a lower extent, in roots and leaves.

The protein localises to the cell membrane. Its function is as follows. Small polypeptide acting as a regulatory molecule which coordinates cellular responses required for differentiation, growth and development, including leaves shape, pedicule elongation, inflorescence organization and fruit maturation, probably by restricting polar cell proliferation in lateral organs and coordinating socket cell recruitment and differentiation at trichome sites. This is Small polypeptide DEVIL 3 from Arabidopsis thaliana (Mouse-ear cress).